We begin with the raw amino-acid sequence, 281 residues long: Putative pyruvate, phosphate dikinase regulatory protein (281 aa).

Residue 153 to 160 coordinates ADP; that stretch reads GISRTSKT.

Belongs to the pyruvate, phosphate/water dikinase regulatory protein family. PDRP subfamily.

It catalyses the reaction N(tele)-phospho-L-histidyl/L-threonyl-[pyruvate, phosphate dikinase] + ADP = N(tele)-phospho-L-histidyl/O-phospho-L-threonyl-[pyruvate, phosphate dikinase] + AMP + H(+). The catalysed reaction is N(tele)-phospho-L-histidyl/O-phospho-L-threonyl-[pyruvate, phosphate dikinase] + phosphate + H(+) = N(tele)-phospho-L-histidyl/L-threonyl-[pyruvate, phosphate dikinase] + diphosphate. In terms of biological role, bifunctional serine/threonine kinase and phosphorylase involved in the regulation of the pyruvate, phosphate dikinase (PPDK) by catalyzing its phosphorylation/dephosphorylation. The protein is Putative pyruvate, phosphate dikinase regulatory protein of Bdellovibrio bacteriovorus (strain ATCC 15356 / DSM 50701 / NCIMB 9529 / HD100).